The following is a 565-amino-acid chain: uncharacterized protein (565 aa).

This is an uncharacterized protein from Acanthamoeba polyphaga (Amoeba).